Here is a 203-residue protein sequence, read N- to C-terminus: CASP-like protein 2U2 (203 aa).

The tract at residues 1–21 is disordered; that stretch reads MGGFVDDGAAGLAPSHGSSRA. The Cytoplasmic portion of the chain corresponds to 1-27; that stretch reads MGGFVDDGAAGLAPSHGSSRAGRGLEG. Residues 28 to 48 form a helical membrane-spanning segment; sequence AGVFLRFVASLLSIAGLMLLV. At 49 to 73 the chain is on the extracellular side; sequence KDNQTVQQMVATEAVTLETKYSDIS. An N-linked (GlcNAc...) asparagine glycan is attached at asparagine 51. The helical transmembrane segment at 74–94 threads the bilayer; the sequence is AFVFLLYTNGLVAVYCFFLAL. The Cytoplasmic segment spans residues 95-108; that stretch reads ASVFSLIASARSGK. The helical transmembrane segment at 109 to 129 threads the bilayer; sequence LAGWVTFVLDQGLAYVLLAAA. At 130–163 the chain is on the extracellular side; sequence AASTEVLYLAENGDLKTSWAEICSQFGHFCHMAR. Residues 164 to 184 form a helical membrane-spanning segment; sequence ASIVVSFLSMLAMAVLSVMSA. Residues 185–203 are Cytoplasmic-facing; that stretch reads QQLFSKYRRPMTAKTAQDI.

The protein belongs to the Casparian strip membrane proteins (CASP) family. Homodimer and heterodimers.

It is found in the cell membrane. The protein is CASP-like protein 2U2 of Osmunda lancea (Fern).